A 177-amino-acid chain; its full sequence is Small ribosomal subunit protein uS5 (177 aa).

In terms of domain architecture, S5 DRBM spans 19-82; it reads WQERVVQIRR…ADGKKQLVEV (64 aa).

It belongs to the universal ribosomal protein uS5 family. In terms of assembly, part of the 30S ribosomal subunit. Contacts proteins S4 and S8.

In terms of biological role, with S4 and S12 plays an important role in translational accuracy. Its function is as follows. Located at the back of the 30S subunit body where it stabilizes the conformation of the head with respect to the body. This Acaryochloris marina (strain MBIC 11017) protein is Small ribosomal subunit protein uS5.